The following is an 864-amino-acid chain: MHERYVPADVEAAAQGDWRAADAYKTKEDSQKPKFYCVSMLPYPSGKLHMGHVRNYTINDVMYRYLRMNGYNTLMPMGWDAFGMPAENAAMANGVPPAKWTYDNIDYMKGQMQSMGLAIDWSREIATCKPDYYKWNQWLFLKMLEKGIAYKKTGTVNWDPVDQTVLANEQVIDGRGWRSGALVEKREIPMYYLRITQYADELLNDLDGLGWPERVKIMQQNWIGKSFGVNFGFPYELDGEQKLLRVFTTRADTIMGVTFCAIAAEHPLATRLAQDKPELLAFIEECKRGGVAEADVATMEKKGVATGFSVKHPLTGEPVEVWIGNYVLMSYGEGAVMGVPGHDERDFAFAKKYDLPIKQVIASEGQTYSLDAWQEWYGDKETAVCVNSGKYDGLRYAEAVDAVAADLKAGGFGDKQVTWRLRDWGVSRQRYWGTPIPIIHCPSCGDVPVPEQDLPVVLPEDLVPDGTGNPLAKSEAFLNCTCPTCGAAAKRETDTMDTFVDSSWYFSRYTAPDAETMVDARTDYWMPMDQYIGGIEHAILHLLYSRFWTKVMRDLGLVKFGEPAKNLLTQGMVLNETYYREDAAGKKTWYNPLDVTVTHDDKGRPVGATLNADGQPVVLGGIEKMSKSKNNGVDPQLLIDQYGADTARLFTMFAAPPEQQLEWSGAGVEGASRFLRRVWSFGYGNREALAARAGFDAATLGDADKALRREIYSVLKQADFDYQRLQYNTVVSAAMKMLNAIDGAKGATPAVLRETYGVLLRVLYPVVPHVTFELWKALGYADEFGPLLDAPWPKVDEAALEQAEIELVLQVNGKVRGALKVAKDASRDAIEAAAVADEAFAKFSDGKPAKKIVVVPGRLVNIVV.

A 'HIGH' region motif is present at residues 42-52 (PYPSGKLHMGH). The 'KMSKS' region motif lies at 624-628 (KMSKS). K627 contributes to the ATP binding site.

It belongs to the class-I aminoacyl-tRNA synthetase family.

The protein localises to the cytoplasm. The catalysed reaction is tRNA(Leu) + L-leucine + ATP = L-leucyl-tRNA(Leu) + AMP + diphosphate. The sequence is that of Leucine--tRNA ligase from Burkholderia cenocepacia (strain ATCC BAA-245 / DSM 16553 / LMG 16656 / NCTC 13227 / J2315 / CF5610) (Burkholderia cepacia (strain J2315)).